Consider the following 152-residue polypeptide: 6,7-dimethyl-8-ribityllumazine synthase (152 aa).

5-amino-6-(D-ribitylamino)uracil is bound by residues F18, 49–51, and 75–77; these read ALE and CVI. (2S)-2-hydroxy-3-oxobutyl phosphate is bound at residue 80–81; that stretch reads ET. H83 functions as the Proton donor in the catalytic mechanism. N108 is a 5-amino-6-(D-ribitylamino)uracil binding site. Residue R122 participates in (2S)-2-hydroxy-3-oxobutyl phosphate binding.

The protein belongs to the DMRL synthase family.

The enzyme catalyses (2S)-2-hydroxy-3-oxobutyl phosphate + 5-amino-6-(D-ribitylamino)uracil = 6,7-dimethyl-8-(1-D-ribityl)lumazine + phosphate + 2 H2O + H(+). Its pathway is cofactor biosynthesis; riboflavin biosynthesis; riboflavin from 2-hydroxy-3-oxobutyl phosphate and 5-amino-6-(D-ribitylamino)uracil: step 1/2. Its function is as follows. Catalyzes the formation of 6,7-dimethyl-8-ribityllumazine by condensation of 5-amino-6-(D-ribitylamino)uracil with 3,4-dihydroxy-2-butanone 4-phosphate. This is the penultimate step in the biosynthesis of riboflavin. The protein is 6,7-dimethyl-8-ribityllumazine synthase of Bartonella bacilliformis (strain ATCC 35685 / KC583 / Herrer 020/F12,63).